We begin with the raw amino-acid sequence, 462 residues long: ATP synthase subunit beta 1 (462 aa).

151–158 (GGAGVGKT) is a binding site for ATP.

Belongs to the ATPase alpha/beta chains family. As to quaternary structure, F-type ATPases have 2 components, CF(1) - the catalytic core - and CF(0) - the membrane proton channel. CF(1) has five subunits: alpha(3), beta(3), gamma(1), delta(1), epsilon(1). CF(0) has four main subunits: a(1), b(1), b'(1) and c(9-12).

It is found in the cell inner membrane. The catalysed reaction is ATP + H2O + 4 H(+)(in) = ADP + phosphate + 5 H(+)(out). Functionally, produces ATP from ADP in the presence of a proton gradient across the membrane. The catalytic sites are hosted primarily by the beta subunits. This is ATP synthase subunit beta 1 from Chlorobium luteolum (strain DSM 273 / BCRC 81028 / 2530) (Pelodictyon luteolum).